A 346-amino-acid polypeptide reads, in one-letter code: tRNA N6-adenosine threonylcarbamoyltransferase (346 aa).

Fe cation-binding residues include H110 and H114. Substrate-binding positions include L132–G136, D165, G178, and N274. Residue D298 participates in Fe cation binding.

It belongs to the KAE1 / TsaD family. It depends on Fe(2+) as a cofactor.

Its subcellular location is the cytoplasm. It carries out the reaction L-threonylcarbamoyladenylate + adenosine(37) in tRNA = N(6)-L-threonylcarbamoyladenosine(37) in tRNA + AMP + H(+). Its function is as follows. Required for the formation of a threonylcarbamoyl group on adenosine at position 37 (t(6)A37) in tRNAs that read codons beginning with adenine. Is involved in the transfer of the threonylcarbamoyl moiety of threonylcarbamoyl-AMP (TC-AMP) to the N6 group of A37, together with TsaE and TsaB. TsaD likely plays a direct catalytic role in this reaction. This chain is tRNA N6-adenosine threonylcarbamoyltransferase, found in Borreliella afzelii (strain PKo) (Borrelia afzelii).